Here is an 80-residue protein sequence, read N- to C-terminus: Waprin-Phi3 (80 aa).

The signal sequence occupies residues 1–22 (MKPWILLLLAGLLILSTQLTTA). Residues 31 to 78 (PKVKPGECPKVKIPPDYPCNQYCVWDFDCEGNKKCCPVGCAKECFPPG) enclose the WAP domain. 4 cysteine pairs are disulfide-bonded: cysteine 38–cysteine 66, cysteine 49–cysteine 70, cysteine 53–cysteine 65, and cysteine 59–cysteine 74.

It belongs to the venom waprin family. Expressed by the venom gland.

The protein resides in the secreted. In terms of biological role, damages membranes of susceptible bacteria. Has no hemolytic activity. Not toxic to mice. Does not inhibit the proteinases elastase and cathepsin G. The chain is Waprin-Phi3 from Philodryas olfersii (Green snake).